Here is a 382-residue protein sequence, read N- to C-terminus: Serine protease 43 (382 aa).

Positions 1 to 27 (MGGFCGADRGGFLALLVWLQLLQPLFS) are cleaved as a signal peptide. The interval 30–97 (YKPREDSGVM…SGTTTKITLE (68 aa)) is disordered. Polar residues-rich tracts occupy residues 56–68 (AQQS…SISH) and 85–95 (GSPSGTTTKIT). The region spanning 119 to 355 (VDPGSLSAGR…YNEWVSYVLS (237 aa)) is the Peptidase S1 domain. Cysteines 144 and 160 form a disulfide. Residues His-159 and Asp-205 each act as charge relay system in the active site. Intrachain disulfides connect Cys-239/Cys-313, Cys-272/Cys-293, and Cys-303/Cys-331. Residue Ser-307 is the Charge relay system of the active site. Residues 362 to 382 (PMGVLVLYLSLVFPLALLVAL) traverse the membrane as a helical segment.

This sequence belongs to the peptidase S1 family. Testis-specific. Expressed in germ cells at the stages from late pachytene spermatocytes to spermatids.

The protein resides in the cell membrane. Functionally, plays a role in spermatogenesis. Involved in germ cell survival during meiosis. Lacks protease activity in vitro. This chain is Serine protease 43, found in Mus musculus (Mouse).